Here is a 441-residue protein sequence, read N- to C-terminus: Damage-control phosphatase ARMT1 (441 aa).

Position 2 is an N-acetylalanine (Ala-2). Lys-40 is modified (N6-acetyllysine). Residue Ser-102 is modified to Phosphoserine. Mn(2+) contacts are provided by Asp-253 and Asn-254. 253 to 254 (DN) provides a ligand contact to substrate. Residues Glu-258 and Asp-291 each coordinate S-adenosyl-L-methionine. Asp-291 contributes to the Mn(2+) binding site. Substrate contacts are provided by residues 367–371 (DLNYR) and Lys-404. The Subfamily III RTxK motif motif lies at 401–404 (RTLK).

This sequence belongs to the damage-control phosphatase family. Sugar phosphate phosphatase III subfamily. The cofactor is Mn(2+). It depends on Ni(2+) as a cofactor. In terms of processing, automethylated.

The catalysed reaction is beta-D-fructose 1-phosphate + H2O = D-fructose + phosphate. It carries out the reaction beta-D-fructose 6-phosphate = dihydroxyacetone + D-glyceraldehyde 3-phosphate. The enzyme catalyses L-glutamyl-[protein] + S-adenosyl-L-methionine = [protein]-L-glutamate 5-O-methyl ester + S-adenosyl-L-homocysteine. Its function is as follows. Metal-dependent phosphatase that shows phosphatase activity against several substrates, including fructose-1-phosphate and fructose-6-phosphate. Its preference for fructose-1-phosphate, a strong glycating agent that causes DNA damage rather than a canonical yeast metabolite, suggests a damage-control function in hexose phosphate metabolism. Has also been shown to have O-methyltransferase activity that methylates glutamate residues of target proteins to form gamma-glutamyl methyl ester residues. Possibly methylates PCNA, suggesting it is involved in the DNA damage response. This Macaca fascicularis (Crab-eating macaque) protein is Damage-control phosphatase ARMT1.